The chain runs to 319 residues: Probable alcohol dehydrogenase (319 aa).

Zn(2+) is bound by residues Cys-18, His-39, Cys-68, Cys-71, Cys-74, Cys-82, and Cys-149.

Belongs to the zinc-containing alcohol dehydrogenase family. Zn(2+) serves as cofactor.

The catalysed reaction is a primary alcohol + NAD(+) = an aldehyde + NADH + H(+). The enzyme catalyses a secondary alcohol + NAD(+) = a ketone + NADH + H(+). The polypeptide is Probable alcohol dehydrogenase (terPD) (Pseudomonas sp).